Consider the following 370-residue polypeptide: Molybdenum import ATP-binding protein ModC (370 aa).

Positions 1-232 (MLDIDVLRQQ…PDIPDFAAQR (232 aa)) constitute an ABC transporter domain. 30-37 (GRSGAGKT) provides a ligand contact to ATP. Residues 292–363 (MVSVQNILAA…IKAMSLLRDE (72 aa)) form the Mop domain.

Belongs to the ABC transporter superfamily. Molybdate importer (TC 3.A.1.8) family. As to quaternary structure, the complex is composed of two ATP-binding proteins (ModC), two transmembrane proteins (ModB) and a solute-binding protein (ModA).

It is found in the cell inner membrane. The enzyme catalyses molybdate(out) + ATP + H2O = molybdate(in) + ADP + phosphate + H(+). Its function is as follows. Part of the ABC transporter complex ModABC involved in molybdenum import. Responsible for energy coupling to the transport system. In Rhodospirillum rubrum (strain ATCC 11170 / ATH 1.1.1 / DSM 467 / LMG 4362 / NCIMB 8255 / S1), this protein is Molybdenum import ATP-binding protein ModC.